The chain runs to 567 residues: Synaptotagmin-like protein 1 (567 aa).

The RabBD domain maps to 31–87; sequence LLDLSFLTEEEQEAISDVLKRDAHLRQLEEGRVSKLRASLEDPWQLKILTGDWFQEA. Positions 103–255 are disordered; it reads RASIRRKKSP…VSSLNSSTLS (153 aa). Ser-120 carries the post-translational modification Phosphoserine. Acidic residues-rich tracts occupy residues 122 to 135 and 170 to 184; these read GEAE…IEGE and GQEE…ELEA. Residues 208–219 show a composition bias toward polar residues; that stretch reads ESQPTPAQSKAT. Position 220 is a phosphoserine (Ser-220). Residues 235 to 255 show a composition bias toward low complexity; it reads SLDRMLSSSSSVSSLNSSTLS. C2 domains follow at residues 271-390 and 403-532; these read VRGS…WLPL and SRGL…VPWM.

In terms of assembly, monomer. Binds NCF2 and NRXN1. Binds RAB27A that has been activated by GTP-binding via its N-terminus. As to expression, highly expressed in lung. Detected at lower levels in spleen, liver and kidney, and at very low levels in heart, brain and skeletal muscle. Expressed in cytotoxic T-lymphocytes (CTL).

It is found in the endomembrane system. It localises to the cell membrane. Its function is as follows. Binds phosphatidylinositol 3,4,5-trisphosphate. May play a role in vesicle trafficking. Acts as a RAB27A effector protein and may play a role in cytotoxic granule exocytosis in lymphocytes. The protein is Synaptotagmin-like protein 1 (Sytl1) of Mus musculus (Mouse).